Reading from the N-terminus, the 295-residue chain is Pyridoxal 5'-phosphate synthase subunit PdxS (295 aa).

Residue Asp25 coordinates D-ribose 5-phosphate. Lys82 serves as the catalytic Schiff-base intermediate with D-ribose 5-phosphate. Gly154 contributes to the D-ribose 5-phosphate binding site. Residue Arg166 coordinates D-glyceraldehyde 3-phosphate. D-ribose 5-phosphate is bound by residues Gly215 and 236–237; that span reads GS.

Belongs to the PdxS/SNZ family. As to quaternary structure, in the presence of PdxT, forms a dodecamer of heterodimers.

The catalysed reaction is aldehydo-D-ribose 5-phosphate + D-glyceraldehyde 3-phosphate + L-glutamine = pyridoxal 5'-phosphate + L-glutamate + phosphate + 3 H2O + H(+). The protein operates within cofactor biosynthesis; pyridoxal 5'-phosphate biosynthesis. Functionally, catalyzes the formation of pyridoxal 5'-phosphate from ribose 5-phosphate (RBP), glyceraldehyde 3-phosphate (G3P) and ammonia. The ammonia is provided by the PdxT subunit. Can also use ribulose 5-phosphate and dihydroxyacetone phosphate as substrates, resulting from enzyme-catalyzed isomerization of RBP and G3P, respectively. The chain is Pyridoxal 5'-phosphate synthase subunit PdxS from Bacillus mycoides (strain KBAB4) (Bacillus weihenstephanensis).